A 727-amino-acid chain; its full sequence is 1,4-alpha-glucan branching enzyme GlgB (727 aa).

D405 acts as the Nucleophile in catalysis. E458 (proton donor) is an active-site residue.

It belongs to the glycosyl hydrolase 13 family. GlgB subfamily. Monomer.

The catalysed reaction is Transfers a segment of a (1-&gt;4)-alpha-D-glucan chain to a primary hydroxy group in a similar glucan chain.. It participates in glycan biosynthesis; glycogen biosynthesis. Functionally, catalyzes the formation of the alpha-1,6-glucosidic linkages in glycogen by scission of a 1,4-alpha-linked oligosaccharide from growing alpha-1,4-glucan chains and the subsequent attachment of the oligosaccharide to the alpha-1,6 position. In Yersinia pseudotuberculosis serotype O:1b (strain IP 31758), this protein is 1,4-alpha-glucan branching enzyme GlgB.